The following is a 131-amino-acid chain: Glycine cleavage system H protein (131 aa).

Positions 24-106 constitute a Lipoyl-binding domain; it reads TVRVGITDYA…YGEGWLVDLR (83 aa). The residue at position 65 (K65) is an N6-lipoyllysine.

Belongs to the GcvH family. As to quaternary structure, the glycine cleavage system is composed of four proteins: P, T, L and H. The cofactor is (R)-lipoate.

Its function is as follows. The glycine cleavage system catalyzes the degradation of glycine. The H protein shuttles the methylamine group of glycine from the P protein to the T protein. The protein is Glycine cleavage system H protein of Mycolicibacterium smegmatis (strain ATCC 700084 / mc(2)155) (Mycobacterium smegmatis).